The sequence spans 195 residues: ATP-dependent Clp protease proteolytic subunit (195 aa).

Residue serine 98 is the Nucleophile of the active site. Histidine 123 is a catalytic residue.

Belongs to the peptidase S14 family. As to quaternary structure, fourteen ClpP subunits assemble into 2 heptameric rings which stack back to back to give a disk-like structure with a central cavity, resembling the structure of eukaryotic proteasomes.

The protein resides in the cytoplasm. It catalyses the reaction Hydrolysis of proteins to small peptides in the presence of ATP and magnesium. alpha-casein is the usual test substrate. In the absence of ATP, only oligopeptides shorter than five residues are hydrolyzed (such as succinyl-Leu-Tyr-|-NHMec, and Leu-Tyr-Leu-|-Tyr-Trp, in which cleavage of the -Tyr-|-Leu- and -Tyr-|-Trp bonds also occurs).. Functionally, cleaves peptides in various proteins in a process that requires ATP hydrolysis. Has a chymotrypsin-like activity. Plays a major role in the degradation of misfolded proteins. This is ATP-dependent Clp protease proteolytic subunit from Wolinella succinogenes (strain ATCC 29543 / DSM 1740 / CCUG 13145 / JCM 31913 / LMG 7466 / NCTC 11488 / FDC 602W) (Vibrio succinogenes).